The chain runs to 458 residues: RuvB-like helicase 1 (458 aa).

71-78 (GGPGTGKT) contributes to the ATP binding site.

The protein belongs to the RuvB family. In terms of assembly, may form heterododecamers with hel-2/rvb2. Component of the SWR1 chromatin remodeling complex, the INO80 chromatin remodeling complex, and of the R2TP complex.

The protein localises to the nucleus. The catalysed reaction is ATP + H2O = ADP + phosphate + H(+). Functionally, DNA helicase which participates in several chromatin remodeling complexes, including the SWR1 and the INO80 complexes. The SWR1 complex mediates the ATP-dependent exchange of histone H2A for the H2A variant H2A.Z leading to transcriptional regulation of selected genes by chromatin remodeling. The INO80 complex remodels chromatin by shifting nucleosomes and is involved in DNA repair. Also involved in pre-rRNA processing. This Neurospora crassa (strain ATCC 24698 / 74-OR23-1A / CBS 708.71 / DSM 1257 / FGSC 987) protein is RuvB-like helicase 1 (hel-1).